Here is a 159-residue protein sequence, read N- to C-terminus: Ribosomal RNA large subunit methyltransferase H (159 aa).

S-adenosyl-L-methionine-binding positions include leucine 76, glycine 108, and 127 to 132 (FGKMTL).

Belongs to the RNA methyltransferase RlmH family. Homodimer.

It is found in the cytoplasm. The enzyme catalyses pseudouridine(1915) in 23S rRNA + S-adenosyl-L-methionine = N(3)-methylpseudouridine(1915) in 23S rRNA + S-adenosyl-L-homocysteine + H(+). Functionally, specifically methylates the pseudouridine at position 1915 (m3Psi1915) in 23S rRNA. This chain is Ribosomal RNA large subunit methyltransferase H, found in Lysinibacillus sphaericus (strain C3-41).